The chain runs to 446 residues: Na(+)/H(+) antiporter NhaA (446 aa).

The next 11 membrane-spanning stretches (helical) occupy residues 23-43 (GGML…SPWG), 73-93 (LMTF…GLEI), 109-129 (LLPI…YYFM), 138-158 (GLAI…SLFG), 167-187 (VFLT…IALF), 193-213 (SVNY…GNFF), 219-239 (WFYI…GIHA), 314-334 (MVNY…SLTA), 348-368 (VLAG…WLVI), 381-401 (WVNL…SLFI), and 419-439 (GVIL…QFAL).

Belongs to the NhaA Na(+)/H(+) (TC 2.A.33) antiporter family.

The protein localises to the cell inner membrane. The enzyme catalyses Na(+)(in) + 2 H(+)(out) = Na(+)(out) + 2 H(+)(in). In terms of biological role, na(+)/H(+) antiporter that extrudes sodium in exchange for external protons. This is Na(+)/H(+) antiporter NhaA from Phocaeicola vulgatus (strain ATCC 8482 / DSM 1447 / JCM 5826 / CCUG 4940 / NBRC 14291 / NCTC 11154) (Bacteroides vulgatus).